A 358-amino-acid chain; its full sequence is Dual-specificity RNA methyltransferase RlmN (358 aa).

Residue E91 is the Proton acceptor of the active site. In terms of domain architecture, Radical SAM core spans 98 to 335; that stretch reads SQGRITQCLS…AIIRKSKGAD (238 aa). The cysteines at positions 105 and 340 are disulfide-linked. 3 residues coordinate [4Fe-4S] cluster: C112, C116, and C119. Residues 164 to 165, S196, 219 to 221, and N295 each bind S-adenosyl-L-methionine; these read GE and SLH. The S-methylcysteine intermediate role is filled by C340.

It belongs to the radical SAM superfamily. RlmN family. Requires [4Fe-4S] cluster as cofactor.

Its subcellular location is the cytoplasm. The catalysed reaction is adenosine(2503) in 23S rRNA + 2 reduced [2Fe-2S]-[ferredoxin] + 2 S-adenosyl-L-methionine = 2-methyladenosine(2503) in 23S rRNA + 5'-deoxyadenosine + L-methionine + 2 oxidized [2Fe-2S]-[ferredoxin] + S-adenosyl-L-homocysteine. It catalyses the reaction adenosine(37) in tRNA + 2 reduced [2Fe-2S]-[ferredoxin] + 2 S-adenosyl-L-methionine = 2-methyladenosine(37) in tRNA + 5'-deoxyadenosine + L-methionine + 2 oxidized [2Fe-2S]-[ferredoxin] + S-adenosyl-L-homocysteine. Specifically methylates position 2 of adenine 2503 in 23S rRNA and position 2 of adenine 37 in tRNAs. m2A2503 modification seems to play a crucial role in the proofreading step occurring at the peptidyl transferase center and thus would serve to optimize ribosomal fidelity. This Oleidesulfovibrio alaskensis (strain ATCC BAA-1058 / DSM 17464 / G20) (Desulfovibrio alaskensis) protein is Dual-specificity RNA methyltransferase RlmN.